We begin with the raw amino-acid sequence, 515 residues long: Membrane-bound transcription factor site-2 protease (515 aa).

The Cytoplasmic segment spans residues 1-3 (MIP). A helical membrane pass occupies residues 4–24 (VSLLVVVVGGWTAVYLADLVL). The Lumenal portion of the chain corresponds to 25 to 74 (KSSVYFKHSYEDWLENNGLSISPFHIRWQTSIFNRAFYSWGRRKARMLYQ). Transmembrane regions (helical) follow at residues 75-95 (WFNF…FLLG) and 96-107 (KTLMQTLAQMMA). Over 108 to 140 (DSPSPYSSSSSSSSSSSSSSSSSSSLHNEQVLQ) the chain is Lumenal. The chain crosses the membrane as a helical span at residues 141-165 (VVVPGINLPVNQLTYFFAAVLISGV). A Zn(2+)-binding site is contributed by histidine 167. Glutamate 168 is an active-site residue. The next 3 helical transmembrane spans lie at 170 to 182 (GHGI…QVRF), 183 to 205 (NGFG…TTHL), and 225 to 247 (FVLA…PFYY). Histidine 171 is a binding site for Zn(2+). Residues 248–442 (TGVGVLITEV…LPVIVETFVK (195 aa)) lie on the Lumenal side of the membrane. Asparagine 333 carries an N-linked (GlcNAc...) asparagine glycan. The next 2 helical transmembrane spans lie at 443–460 (YLIS…VPCF) and 461–472 (ALDGQWILNSFL). The Lumenal portion of the chain corresponds to 473-488 (DATLTSVIGDNDVKDL). A helical transmembrane segment spans residues 489–509 (IGFFILLGGSVLLAANVTLGL). The Cytoplasmic segment spans residues 510–515 (WMVTAR).

This sequence belongs to the peptidase M50A family. Requires Zn(2+) as cofactor.

The protein resides in the membrane. The protein localises to the cytoplasm. It is found in the golgi apparatus membrane. The enzyme catalyses Cleaves several transcription factors that are type-2 transmembrane proteins within membrane-spanning domains. Known substrates include sterol regulatory element-binding protein (SREBP) -1, SREBP-2 and forms of the transcriptional activator ATF6. SREBP-2 is cleaved at the site 477-DRSRILL-|-CVLTFLCLSFNPLTSLLQWGGA-505. The residues Asn-Pro, 11 residues distal to the site of cleavage in the membrane-spanning domain, are important for cleavage by S2P endopeptidase. Replacement of either of these residues does not prevent cleavage, but there is no cleavage if both of these residues are replaced.. In terms of biological role, zinc metalloprotease that mediates intramembrane proteolysis of proteins such as ATF6, ATF6B, SREBF1/SREBP1 and SREBF2/SREBP2. Catalyzes the second step in the proteolytic activation of the sterol regulatory element-binding proteins (SREBPs) SREBF1/SREBP1 and SREBF2/SREBP2: cleaves SREBPs within the first transmembrane segment, thereby releasing the N-terminal segment with a portion of the transmembrane segment attached. Mature N-terminal SREBP fragments shuttle to the nucleus and activate gene transcription. Also mediates the second step in the proteolytic activation of the cyclic AMP-dependent transcription factor ATF-6 (ATF6 and ATF6B). Involved in intramembrane proteolysis during bone formation. In astrocytes and osteoblasts, upon DNA damage and ER stress, mediates the second step of the regulated intramembrane proteolytic activation of the transcription factor CREB3L1, leading to the inhibition of cell-cycle progression. The sequence is that of Membrane-bound transcription factor site-2 protease (Mbtps2) from Mus musculus (Mouse).